A 220-amino-acid chain; its full sequence is Iron-sulfur flavoprotein AF_1436 (220 aa).

The [4Fe-4S] cluster site is built by Cys47, Cys50, Cys53, and Cys59.

It belongs to the SsuE family. Isf subfamily. In terms of assembly, homodimer. The cofactor is FMN. Requires [4Fe-4S] cluster as cofactor.

Functionally, redox-active protein probably involved in electron transport. The chain is Iron-sulfur flavoprotein AF_1436 from Archaeoglobus fulgidus (strain ATCC 49558 / DSM 4304 / JCM 9628 / NBRC 100126 / VC-16).